The following is a 128-amino-acid chain: Small ribosomal subunit protein bS16 (128 aa).

Residues 107–128 form a disordered region; the sequence is AAEAKAAAANESDDSGTDSTES. A compositionally biased stretch (acidic residues) spans 117-128; it reads ESDDSGTDSTES.

The protein belongs to the bacterial ribosomal protein bS16 family.

The sequence is that of Small ribosomal subunit protein bS16 from Synechococcus sp. (strain CC9311).